The chain runs to 627 residues: MGNLLNSIHSPADIKHFSVPQLEALAQEIRDRLIQSVARTGGHIGPNLGVVELTIAMHYVFDTPQDRFVFDVSHQAYVHKLLTGRANRFDTLRQPGGLNGFMLRSESQHDSYGAGHAGTALSAALGMAVARDIAGGHEHVVALAGDAAFTNGISFEALNNIADQTRRLIVVLNDNEWSIDRNVGAIARYLHKIVTNEHVSQFHDSAARLLKRIGGPAAANMVRRAEEAAKGMLWPSVLFEEFGLTYYGPIDGHNLSLLIDTFKFLKQQDRPVLLHAITQKGRGFEPALAGQKKFHGLGPFDPETGETSSSGQPTYSEVFARSLVKLADQNDKVVAITAAMPNGTGLDHFRPHHPARYFDVGIAEEHAVIFAAGMATRGFKPYCAIYSTFLQRAFDPIVHDVCLQNLPVVFCMDRGGLSGDDGPTHHGLFDISYLRGIPNIVHMVPADEDELADMMYTAMLHDGPSAIRYPRGTGPGHAVKQQPEALPIGKAKVLHEGEDIAILGLGALLPMAEQIREELARQGYRAAVINPRFVKPVDTELLAHYADRVTAFLTLEDHVLMGGFGSAVMEELNALGKSTPVVRIGWPDRFIEHGKVDQLRARYGISVEAAMEKLAPYLTRSAPLSVR.

Residues His74 and 115–117 (GHA) contribute to the thiamine diphosphate site. Residue Asp146 participates in Mg(2+) binding. Residues 147–148 (AA), Asn175, Phe284, and Glu364 each bind thiamine diphosphate. Asn175 contacts Mg(2+).

It belongs to the transketolase family. DXPS subfamily. In terms of assembly, homodimer. It depends on Mg(2+) as a cofactor. Thiamine diphosphate serves as cofactor.

It carries out the reaction D-glyceraldehyde 3-phosphate + pyruvate + H(+) = 1-deoxy-D-xylulose 5-phosphate + CO2. It functions in the pathway metabolic intermediate biosynthesis; 1-deoxy-D-xylulose 5-phosphate biosynthesis; 1-deoxy-D-xylulose 5-phosphate from D-glyceraldehyde 3-phosphate and pyruvate: step 1/1. Its function is as follows. Catalyzes the acyloin condensation reaction between C atoms 2 and 3 of pyruvate and glyceraldehyde 3-phosphate to yield 1-deoxy-D-xylulose-5-phosphate (DXP). The chain is 1-deoxy-D-xylulose-5-phosphate synthase from Acidobacterium capsulatum (strain ATCC 51196 / DSM 11244 / BCRC 80197 / JCM 7670 / NBRC 15755 / NCIMB 13165 / 161).